Reading from the N-terminus, the 241-residue chain is dTTP/UTP pyrophosphatase (241 aa).

At S38 the chain carries Phosphoserine. D105 functions as the Proton acceptor in the catalytic mechanism.

It belongs to the Maf family. YhdE subfamily. A divalent metal cation is required as a cofactor.

The protein resides in the cytoplasm. It localises to the nucleus. The enzyme catalyses dTTP + H2O = dTMP + diphosphate + H(+). It catalyses the reaction UTP + H2O = UMP + diphosphate + H(+). Its function is as follows. Nucleoside triphosphate pyrophosphatase that hydrolyzes dTTP and UTP. May have a dual role in cell division arrest and in preventing the incorporation of modified nucleotides into cellular nucleic acids. The polypeptide is dTTP/UTP pyrophosphatase (Schizosaccharomyces pombe (strain 972 / ATCC 24843) (Fission yeast)).